The following is a 133-amino-acid chain: ATP synthase epsilon chain, chloroplastic (133 aa).

This sequence belongs to the ATPase epsilon chain family. In terms of assembly, F-type ATPases have 2 components, CF(1) - the catalytic core - and CF(0) - the membrane proton channel. CF(1) has five subunits: alpha(3), beta(3), gamma(1), delta(1), epsilon(1). CF(0) has three main subunits: a, b and c.

Its subcellular location is the plastid. It is found in the chloroplast thylakoid membrane. In terms of biological role, produces ATP from ADP in the presence of a proton gradient across the membrane. This Nicotiana tomentosiformis (Tobacco) protein is ATP synthase epsilon chain, chloroplastic.